The primary structure comprises 227 residues: tRNA (guanine-N(1)-)-methyltransferase (227 aa).

S-adenosyl-L-methionine is bound by residues G112 and 132–137 (IGDFIL).

This sequence belongs to the RNA methyltransferase TrmD family. In terms of assembly, homodimer.

Its subcellular location is the cytoplasm. The enzyme catalyses guanosine(37) in tRNA + S-adenosyl-L-methionine = N(1)-methylguanosine(37) in tRNA + S-adenosyl-L-homocysteine + H(+). Its function is as follows. Specifically methylates guanosine-37 in various tRNAs. The protein is tRNA (guanine-N(1)-)-methyltransferase of Sulfurovum sp. (strain NBC37-1).